The primary structure comprises 741 residues: Zinc transporter ZIP6 (741 aa).

The signal sequence occupies residues 1-20; the sequence is MATNLSVIMILTFALWVTNP. Residues 21–311 are Extracellular-facing; it reads LHELQSTAAF…PKTYSLQIAW (291 aa). Asn-68 carries N-linked (GlcNAc...) asparagine glycosylation. The span at 95–111 shows a compositional bias: basic and acidic residues; sequence HDHERHSDHERHSDHER. 2 disordered regions span residues 95-172 and 189-213; these read HDHE…EVTS and ETPKPGRRTKDINPSTPPSITEKSR. Over residues 135–147 the composition is skewed to polar residues; that stretch reads DNSGKNPNTSQGK. N-linked (GlcNAc...) asparagine glycosylation occurs at Asn-142. The segment covering 150-162 has biased composition (basic and acidic residues); sequence RPAEHVNGRRNGK. Low complexity predominate over residues 163-172; sequence ESASSSEVTS. Polar residues predominate over residues 200–209; it reads INPSTPPSIT. N-linked (GlcNAc...) asparagine glycosylation is found at Asn-226, Asn-251, and Asn-268. Residues 312-332 traverse the membrane as a helical segment; it reads LGGFIAISIISFLSLLGVILV. At 333–341 the chain is on the cytoplasmic side; it reads PLMNRVFFK. Residues 342 to 362 form a helical membrane-spanning segment; sequence FLLSFLVALAVGTLSGDALLH. Residues 363–409 lie on the Extracellular side of the membrane; the sequence is LLPHSHASHHHSHSHEEPAMEMKRGPLFSHLSAQNLEESSYFDSTWK. Residues 410–430 traverse the membrane as a helical segment; sequence GLTALGGLYFMFLVEHVLTLI. Topologically, residues 431–643 are cytoplasmic; that stretch reads KQFKDKKKKN…LKAGMTVKQA (213 aa). Positions 434 to 494 are disordered; the sequence is KDKKKKNQKK…QEPSPFDSQQ (61 aa). The stretch at 450-475 forms a coiled coil; sequence VESKKQLSKYESQLSTNEEKVDTGER. Phosphoserine occurs at positions 457 and 464. Over residues 466 to 477 the composition is skewed to basic and acidic residues; that stretch reads NEEKVDTGERPE. A compositionally biased stretch (polar residues) spans 481 to 494; the sequence is QADSQEPSPFDSQQ. A helical membrane pass occupies residues 644 to 664; it reads VLYNALSAMLAYLGMATGIFI. Residues 665–672 lie on the Extracellular side of the membrane; that stretch reads GHYAENVS. A glycan (N-linked (GlcNAc...) asparagine) is linked at Asn-670. Residues 673–693 form a helical membrane-spanning segment; that stretch reads MWIFALTAGLFMYVALVDMVP. Residues 694-710 are Cytoplasmic-facing; the sequence is EMLHNDASDHGCSRWGY. The chain crosses the membrane as a helical span at residues 711–731; sequence FFLQNAGILLGFGIMLLISIF. Residues 732–741 lie on the Extracellular side of the membrane; it reads EHKIVFRINF.

Belongs to the ZIP transporter (TC 2.A.5) family. In terms of assembly, interacts with SLC39A10; which triggers cells to undergo EMT and mitosis. Found in a complex with SLC39A6, SLC39A10 and with the 'Ser-727' phosphorylated form of STAT3 throughout mitosis. Found in a complex with SLC39A6, SLC39A10 and with NCAM1; this complex controls NCAM1 phosphorylation and integration into focal adhesion complexes during epithelial-to-mesenchymal transition (EMT). Found in a complex with SLC39A6, SLC39A10 and with GSK3B that controls NCAM1 phosphorylation. Cleaved on the N-terminus before locating to the plasma membrane. Post-translationally, N-glycosylated. In terms of processing, phosphorylated by ZAP70 in response to TCR stimulation leading to its activation. In terms of tissue distribution, expressed in the endothelial cells of the brain capillaries.

It localises to the cell membrane. The protein resides in the cell projection. Its subcellular location is the lamellipodium membrane. It is found in the membrane raft. The protein localises to the apical cell membrane. It carries out the reaction Zn(2+)(in) = Zn(2+)(out). Functionally, zinc-influx transporter which plays a role in zinc homeostasis and in the induction of epithelial-to-mesenchymal transition (EMT). When associated with SLC39A10, the heterodimer formed by SLC39A10 and SLC39A6 mediates cellular zinc uptake to trigger cells to undergo epithelial- to-mesenchymal transition (EMT). The SLC39A10-SLC39A6 heterodimer also controls NCAM1 phosphorylation and its integration into focal adhesion complexes during EMT. Zinc influx inactivates GSK3B, enabling unphosphorylated SNAI1 in the nucleus to down-regulate adherence genes such as CDH1, causing loss of cell adherence. In addition, the SLC39A10-SLC39A6 heterodimer plays an essentiel role in initiating mitosis by importing zinc into cells to initiate a pathway resulting in the onset of mitosis. Participates in the T-cell receptor signaling regulation by mediating cellular zinc uptake into activated lymphocytes. Regulates the zinc influx necessary for proper meiotic progression to metaphase II (MII) that allows the oocyte-to-egg transition. In Rattus norvegicus (Rat), this protein is Zinc transporter ZIP6.